Consider the following 92-residue polypeptide: Small ribosomal subunit protein uS19 (92 aa).

It belongs to the universal ribosomal protein uS19 family.

Its function is as follows. Protein S19 forms a complex with S13 that binds strongly to the 16S ribosomal RNA. The protein is Small ribosomal subunit protein uS19 of Granulibacter bethesdensis (strain ATCC BAA-1260 / CGDNIH1).